The chain runs to 129 residues: Large ribosomal subunit protein bL20 (129 aa).

A compositionally biased stretch (basic residues) spans 1 to 17; it reads MARVKRSVNAHKKRRSV. The disordered stretch occupies residues 1–29; the sequence is MARVKRSVNAHKKRRSVLKASKGYRGQRS.

The protein belongs to the bacterial ribosomal protein bL20 family.

Binds directly to 23S ribosomal RNA and is necessary for the in vitro assembly process of the 50S ribosomal subunit. It is not involved in the protein synthesizing functions of that subunit. This Mycobacterium ulcerans (strain Agy99) protein is Large ribosomal subunit protein bL20.